Here is a 470-residue protein sequence, read N- to C-terminus: 3-oxo-isoapionate kinase (470 aa).

Asp-30 and Arg-78 together coordinate substrate. ATP-binding positions include Ser-291, 403-406, and Gly-451; that span reads GGDS.

Belongs to the four-carbon acid sugar kinase family.

The catalysed reaction is 3-oxoisoapionate + ATP = 3-oxoisoapionate 4-phosphate + ADP + H(+). The protein operates within carbohydrate metabolism. Involved in catabolism of D-apiose. Catalyzes the phosphorylation of 3-oxo-isoapionate to 3-oxo-isoapionate 4-phosphate. This chain is 3-oxo-isoapionate kinase, found in Paraburkholderia graminis (strain ATCC 700544 / DSM 17151 / LMG 18924 / NCIMB 13744 / C4D1M).